Here is a 219-residue protein sequence, read N- to C-terminus: Chloramphenicol acetyltransferase (219 aa).

H193 functions as the Proton acceptor in the catalytic mechanism.

The protein belongs to the chloramphenicol acetyltransferase family. In terms of assembly, homotrimer.

It catalyses the reaction chloramphenicol + acetyl-CoA = chloramphenicol 3-acetate + CoA. Functionally, this enzyme is an effector of chloramphenicol resistance in bacteria. This chain is Chloramphenicol acetyltransferase (cat), found in Klebsiella sp.